Here is a 234-residue protein sequence, read N- to C-terminus: MKAAVVVFPGSNCDKDTFYVLKYVMGFDCYYVFHKDHFYEKEFDLIVLPGGFSYGDYLRAGAIARFSPVMRSVSKAAENGVLIVGICNGFQILTEAGLLPGVLMKNKDLRFHCHDVYLRVDNNKTPFTLAYSEGEVIKMNIAHGEGNYYFDHCKEIEDKIVLRYCDRNGNITEDSNPNGSVLNIAGIVSKNGNVFGLMPHPERCSEKLLGSDNGKKIFESVALYLERRKDHAFA.

One can recognise a Glutamine amidotransferase type-1 domain in the interval 3–231 (AAVVVFPGSN…ALYLERRKDH (229 aa)). The Nucleophile role is filled by C87. Residues H200 and E202 contribute to the active site.

Part of the FGAM synthase complex composed of 1 PurL, 1 PurQ and 2 PurS subunits.

Its subcellular location is the cytoplasm. The enzyme catalyses N(2)-formyl-N(1)-(5-phospho-beta-D-ribosyl)glycinamide + L-glutamine + ATP + H2O = 2-formamido-N(1)-(5-O-phospho-beta-D-ribosyl)acetamidine + L-glutamate + ADP + phosphate + H(+). It carries out the reaction L-glutamine + H2O = L-glutamate + NH4(+). Its pathway is purine metabolism; IMP biosynthesis via de novo pathway; 5-amino-1-(5-phospho-D-ribosyl)imidazole from N(2)-formyl-N(1)-(5-phospho-D-ribosyl)glycinamide: step 1/2. In terms of biological role, part of the phosphoribosylformylglycinamidine synthase complex involved in the purines biosynthetic pathway. Catalyzes the ATP-dependent conversion of formylglycinamide ribonucleotide (FGAR) and glutamine to yield formylglycinamidine ribonucleotide (FGAM) and glutamate. The FGAM synthase complex is composed of three subunits. PurQ produces an ammonia molecule by converting glutamine to glutamate. PurL transfers the ammonia molecule to FGAR to form FGAM in an ATP-dependent manner. PurS interacts with PurQ and PurL and is thought to assist in the transfer of the ammonia molecule from PurQ to PurL. The protein is Phosphoribosylformylglycinamidine synthase subunit PurQ of Pseudothermotoga lettingae (strain ATCC BAA-301 / DSM 14385 / NBRC 107922 / TMO) (Thermotoga lettingae).